Reading from the N-terminus, the 123-residue chain is Small ribosomal subunit protein uS13 (123 aa).

Residues 94 to 123 (RRGLPVRGQHTKNNARTRKGPARAIAGKKK) are disordered.

This sequence belongs to the universal ribosomal protein uS13 family. As to quaternary structure, part of the 30S ribosomal subunit. Forms a loose heterodimer with protein S19. Forms two bridges to the 50S subunit in the 70S ribosome.

Its function is as follows. Located at the top of the head of the 30S subunit, it contacts several helices of the 16S rRNA. In the 70S ribosome it contacts the 23S rRNA (bridge B1a) and protein L5 of the 50S subunit (bridge B1b), connecting the 2 subunits; these bridges are implicated in subunit movement. Contacts the tRNAs in the A and P-sites. This chain is Small ribosomal subunit protein uS13, found in Oenococcus oeni (strain ATCC BAA-331 / PSU-1).